The primary structure comprises 590 residues: V-type ATP synthase alpha chain (590 aa).

An ATP-binding site is contributed by 232-239; sequence GPFGSGKT.

This sequence belongs to the ATPase alpha/beta chains family.

The enzyme catalyses ATP + H2O + 4 H(+)(in) = ADP + phosphate + 5 H(+)(out). Produces ATP from ADP in the presence of a proton gradient across the membrane. The V-type alpha chain is a catalytic subunit. The chain is V-type ATP synthase alpha chain from Thermoanaerobacter sp. (strain X514).